Reading from the N-terminus, the 533-residue chain is MKASFFVFAISALQALQASVASAYSEVPGKRSVVLNLQHSQYDHVARKLERTKVLNKRDSSGYPVLDLEYTDAGGYFANLTLGSNERVYSLTLDTGSPYTWVTAKNITALSASEIWSDTDGVDAGRSTSDIRTNACTNYTCFDYSSTTARRTNSSTIGFLASYGDNTTVLGYNMVDNAYFAGLTLPGFEFGLATREYDSSQISVTPGIIGLSVAMTITGISSDDKVVAFTPPTIVDQLVSANVIDTPAFGIYLNEDVGELIFGGYDKAKINGSVHWVNISSSDDSTFYSVNLESITVTNSTSSNNVQSSKRSSKDIEVNTTVTLDTGTVYIYLPEDTVESIADQYQGIVSEYGYVVIYCDSFSDSDYISFNFGSDADFHVSVNDLVIYRQESTSGDICYLALFEGDTSSYLLGQYFLQYVYSIYDWDAQKIGLAALNSNATSTANHQILNINSALRSVTSGQSVSATPTVSMSIAATSFGSSLVLTASASPSSTSVDGSSSSDSSEASGAASVGVSISAIVLCASTLISLLFA.

An N-terminal signal peptide occupies residues 1–23 (MKASFFVFAISALQALQASVASA). Residues 76–434 (YFANLTLGSN…DWDAQKIGLA (359 aa)) form the Peptidase A1 domain. Asparagine 79 carries N-linked (GlcNAc...) asparagine glycosylation. The active site involves aspartate 94. N-linked (GlcNAc...) asparagine glycans are attached at residues asparagine 106, asparagine 138, asparagine 153, asparagine 166, asparagine 271, asparagine 278, asparagine 299, and asparagine 319. Residue aspartate 325 is part of the active site. N-linked (GlcNAc...) asparagine glycosylation occurs at asparagine 439.

The protein belongs to the peptidase A1 family.

In terms of biological role, involved in degradation or processing of the mating pheromones. Its loss may cause a persistent response to the pheromones. It may cleave the mating pheromone M-factor. May be involved in processing of zymogens that are required for zygote formation. The polypeptide is Aspartic proteinase sxa1 (sxa1) (Schizosaccharomyces pombe (strain 972 / ATCC 24843) (Fission yeast)).